The sequence spans 244 residues: Gas vesicle protein F (244 aa).

Residues 1 to 109 form an N-terminus region; it reads MTVGLYLYGI…QLKELFAKLS (109 aa). Residues 110 to 233 are C-terminus, modifed ferredoxin fold; that stretch reads GQREVSIKIF…GDRLRIRYNN (124 aa). Residues 234–244 form a C-tail region; that stretch reads LTAPYTFAQLI.

The protein belongs to the gas vesicle GvpF/GvpL family. As to quaternary structure, binds GvpA.

Its subcellular location is the gas vesicle. In terms of biological role, a minor component of the gas vesicle, may be involved in preventing GvpA aggregation during gas vesicle nucleation. Gas vesicles (GV) are hollow, gas filled proteinaceous nanostructures. During planktonic growth they allow positioning of the organism at a favorable depth for light or nutrient acquisition. The polypeptide is Gas vesicle protein F (Microcystis aeruginosa (strain PCC 7806)).